The following is a 244-amino-acid chain: MNEKNIKHSQNFITSKHNIDKIMTNIRLNEHDNIFEIGSGKGHFTLELVQRCNFVTAIEIDHKLCKTTENKLVDHDNFQVLNKDILQFKFPKNQSYKIFGNIPYNISTDIIRKIVFDSIADEIYLIVEYGFAKRLLNTKRSFALFLMAEVDISILSMVPREYFHPKPKVNSSLIRLNRKKSRISHKDKQKYNYFVMKWVNKEYKKIFTKNQFNNSLKHAGIDDLNNISFEQFLSLFNSYKLFNK.

S-adenosyl-L-methionine is bound by residues Asn11, Ile13, Gly38, Glu59, Asp84, and Asn101.

The protein belongs to the class I-like SAM-binding methyltransferase superfamily. rRNA adenine N(6)-methyltransferase family.

The enzyme catalyses adenosine(2085) in 23S rRNA + 2 S-adenosyl-L-methionine = N(6)-dimethyladenosine(2085) in 23S rRNA + 2 S-adenosyl-L-homocysteine + 2 H(+). In terms of biological role, this protein produces a dimethylation of the adenine residue at position 2085 in 23S rRNA, resulting in reduced affinity between ribosomes and macrolide-lincosamide-streptogramin B antibiotics. The protein is rRNA adenine N-6-methyltransferase (ermM) of Staphylococcus epidermidis.